A 623-amino-acid chain; its full sequence is Glutamyl-tRNA(Gln) amidotransferase subunit E (623 aa).

This sequence belongs to the GatB/GatE family. GatE subfamily. In terms of assembly, heterodimer of GatD and GatE.

The enzyme catalyses L-glutamyl-tRNA(Gln) + L-glutamine + ATP + H2O = L-glutaminyl-tRNA(Gln) + L-glutamate + ADP + phosphate + H(+). In terms of biological role, allows the formation of correctly charged Gln-tRNA(Gln) through the transamidation of misacylated Glu-tRNA(Gln) in organisms which lack glutaminyl-tRNA synthetase. The reaction takes place in the presence of glutamine and ATP through an activated gamma-phospho-Glu-tRNA(Gln). The GatDE system is specific for glutamate and does not act on aspartate. This is Glutamyl-tRNA(Gln) amidotransferase subunit E from Haloarcula marismortui (strain ATCC 43049 / DSM 3752 / JCM 8966 / VKM B-1809) (Halobacterium marismortui).